The following is a 147-amino-acid chain: Hemoglobin subunit gamma-2 (147 aa).

Residues 3–147 form the Globin domain; it reads HFTEEDKATI…VASALSSRYH (145 aa). A Phosphothreonine modification is found at Thr13. Phosphoserine occurs at positions 45, 51, and 53. The residue at position 60 (Lys60) is an N6-acetyllysine. Residue His64 coordinates heme b. An N6-acetyllysine modification is found at Lys83. His93 is a heme b binding site. Residue Cys94 is modified to S-nitrosocysteine. Ser140, Ser143, and Ser144 each carry phosphoserine.

It belongs to the globin family. Heterotetramer of two alpha chains and two gamma chains in fetal hemoglobin (Hb F). In terms of tissue distribution, red blood cells.

In terms of biological role, gamma chains make up the fetal hemoglobin F, in combination with alpha chains. This is Hemoglobin subunit gamma-2 (HBG2) from Pongo pygmaeus (Bornean orangutan).